Here is a 282-residue protein sequence, read N- to C-terminus: Bifunctional protein FolD (282 aa).

NADP(+) contacts are provided by residues 165 to 167 (GRS), Ser-190, and Thr-231.

This sequence belongs to the tetrahydrofolate dehydrogenase/cyclohydrolase family. In terms of assembly, homodimer.

The enzyme catalyses (6R)-5,10-methylene-5,6,7,8-tetrahydrofolate + NADP(+) = (6R)-5,10-methenyltetrahydrofolate + NADPH. The catalysed reaction is (6R)-5,10-methenyltetrahydrofolate + H2O = (6R)-10-formyltetrahydrofolate + H(+). The protein operates within one-carbon metabolism; tetrahydrofolate interconversion. Its function is as follows. Catalyzes the oxidation of 5,10-methylenetetrahydrofolate to 5,10-methenyltetrahydrofolate and then the hydrolysis of 5,10-methenyltetrahydrofolate to 10-formyltetrahydrofolate. The polypeptide is Bifunctional protein FolD (Clostridium botulinum (strain Eklund 17B / Type B)).